The primary structure comprises 579 residues: Protein alan shepard (579 aa).

The segment covering 1-12 has biased composition (pro residues); sequence MHPRYSPAPPPQ. A disordered region spans residues 1–66; sequence MHPRYSPAPP…GSSSSAAAAP (66 aa). The residue at position 5 (tyrosine 5) is a Phosphotyrosine. Low complexity predominate over residues 13–24; it reads QQQQMGGPPHQQ. Gly residues predominate over residues 25 to 35; that stretch reads QGGGGGGGGSM. The segment covering 37 to 54 has biased composition (polar residues); that stretch reads GPSNAQQLPPQIPRSQNY. Residues 55–66 show a composition bias toward low complexity; the sequence is SNGSSSSAAAAP. A phosphotyrosine mark is found at tyrosine 125 and tyrosine 142. The interval 164-225 is disordered; sequence PATTTYGQRV…TVQNQNQQGG (62 aa). Positions 178-225 are enriched in low complexity; sequence SPSNTNSSSSSNTGSQSGTLSTSLSNTTNTNTNMGPNGTVQNQNQQGG. 2 RRM domains span residues 231–304 and 310–389; these read TNLY…MAKQ and TNLY…FADG. The disordered stretch occupies residues 553-579; sequence MTDSEQASTAASPDEAYTQYPHQAAPK.

Functionally, has a role in the perception of gravity. The chain is Protein alan shepard from Drosophila sechellia (Fruit fly).